The chain runs to 196 residues: Holliday junction branch migration complex subunit RuvA (196 aa).

Positions 1–63 (MLDFIKGEIV…EETHQLFGFI (63 aa)) are domain I. The tract at residues 64–142 (DKKERQLFTH…PDNIPSSDTI (79 aa)) is domain II. The segment at 143 to 146 (ITNI) is flexible linker. The domain III stretch occupies residues 146–196 (ISSNITKEAITALITLGFSQSASQKVVNKIVSNNSSSTTIEQIIKKALKLL).

The protein belongs to the RuvA family. As to quaternary structure, homotetramer. Forms an RuvA(8)-RuvB(12)-Holliday junction (HJ) complex. HJ DNA is sandwiched between 2 RuvA tetramers; dsDNA enters through RuvA and exits via RuvB. An RuvB hexamer assembles on each DNA strand where it exits the tetramer. Each RuvB hexamer is contacted by two RuvA subunits (via domain III) on 2 adjacent RuvB subunits; this complex drives branch migration. In the full resolvosome a probable DNA-RuvA(4)-RuvB(12)-RuvC(2) complex forms which resolves the HJ.

The protein resides in the cytoplasm. The RuvA-RuvB-RuvC complex processes Holliday junction (HJ) DNA during genetic recombination and DNA repair, while the RuvA-RuvB complex plays an important role in the rescue of blocked DNA replication forks via replication fork reversal (RFR). RuvA specifically binds to HJ cruciform DNA, conferring on it an open structure. The RuvB hexamer acts as an ATP-dependent pump, pulling dsDNA into and through the RuvAB complex. HJ branch migration allows RuvC to scan DNA until it finds its consensus sequence, where it cleaves and resolves the cruciform DNA. This Azobacteroides pseudotrichonymphae genomovar. CFP2 protein is Holliday junction branch migration complex subunit RuvA.